The sequence spans 273 residues: 4-hydroxy-tetrahydrodipicolinate reductase (273 aa).

NAD(+) is bound by residues 12-17 and Glu38; that span reads GAGGRM. Arg39 serves as a coordination point for NADP(+). NAD(+)-binding positions include 102-104 and 126-129; these read GTT and AANF. His159 acts as the Proton donor/acceptor in catalysis. His160 provides a ligand contact to (S)-2,3,4,5-tetrahydrodipicolinate. The active-site Proton donor is the Lys163. 169 to 170 serves as a coordination point for (S)-2,3,4,5-tetrahydrodipicolinate; the sequence is GT.

The protein belongs to the DapB family. Homotetramer.

The protein localises to the cytoplasm. The catalysed reaction is (S)-2,3,4,5-tetrahydrodipicolinate + NAD(+) + H2O = (2S,4S)-4-hydroxy-2,3,4,5-tetrahydrodipicolinate + NADH + H(+). The enzyme catalyses (S)-2,3,4,5-tetrahydrodipicolinate + NADP(+) + H2O = (2S,4S)-4-hydroxy-2,3,4,5-tetrahydrodipicolinate + NADPH + H(+). It functions in the pathway amino-acid biosynthesis; L-lysine biosynthesis via DAP pathway; (S)-tetrahydrodipicolinate from L-aspartate: step 4/4. In terms of biological role, catalyzes the conversion of 4-hydroxy-tetrahydrodipicolinate (HTPA) to tetrahydrodipicolinate. In Salmonella dublin (strain CT_02021853), this protein is 4-hydroxy-tetrahydrodipicolinate reductase.